We begin with the raw amino-acid sequence, 395 residues long: Probable alcohol dehydrogenase EutG (395 aa).

Residues Asp-57, 116 to 120 (GSVLD), 156 to 160 (TTAGT), Lys-178, and 197 to 201 (LTEGV) each bind NAD(+). The Fe cation site is built by Asp-212, His-216, His-281, and His-295. His-295 and Asp-354 together coordinate NAD(+).

It belongs to the iron-containing alcohol dehydrogenase family. Requires Fe cation as cofactor.

It localises to the bacterial microcompartment. It carries out the reaction ethanol + NAD(+) = acetaldehyde + NADH + H(+). Its pathway is amine and polyamine degradation; ethanolamine degradation. Functionally, may act on the acetaldehyde produced from the degradation of ethanolamine, producing ethanol. Active on acetaldehyde and isobutyraldehyde in vitro. In vitro works equally well with NADH or NADPH. This Escherichia coli (strain K12) protein is Probable alcohol dehydrogenase EutG (eutG).